A 1038-amino-acid chain; its full sequence is uncharacterized protein (1038 aa).

The segment covering 1–14 (MEENTAQKQSNATG) has biased composition (polar residues). Residues 1-100 (MEENTAQKQS…QSENENYDFS (100 aa)) are disordered. Residues 58–71 (NPERELNSDGTDRI) show a composition bias toward basic and acidic residues. Over residues 72–83 (IEEEEEEDDIEN) the composition is skewed to acidic residues. Serine 112, serine 113, and serine 114 each carry phosphoserine. Disordered regions lie at residues 144–201 (GKDP…VKRR), 360–381 (ELDNTSEKATLETSSKPVTEQA), 422–441 (SHSNHSNEKFEQIPSPDEKL), 454–526 (QTTK…SGEL), and 556–575 (TNSEVETVTNDPSFSQQPGT). The segment covering 156-179 (SSMASSSTRSSQSSQVSAIQPQSQ) has biased composition (low complexity). A compositionally biased stretch (basic and acidic residues) spans 180 to 198 (DDNRVSDIRQMENRRELNV). Composition is skewed to basic and acidic residues over residues 426–441 (HSNEKFEQIPSPDEKL) and 489–505 (DAEKEKDENLSKPEHHP). Serine 436 carries the phosphoserine modification. Residues 506-522 (SITSVNSPFLYSPSKQP) are compositionally biased toward polar residues. A phosphoserine mark is found at serine 618 and serine 856. Disordered regions lie at residues 803 to 864 (RGSL…ASAD), 940 to 974 (GEAPKEAPPPPRSEPVSTTTKLAKRITQPSLSPAR), and 1005 to 1024 (KAKSEQSNAKSSSSSIKESK). Residues 826-859 (TLSLKTSTTGLSSHSKSAENNSTQQSTTSPSINS) show a composition bias toward low complexity. The span at 955–974 (VSTTTKLAKRITQPSLSPAR) shows a compositional bias: polar residues. Residues 1009–1020 (EQSNAKSSSSSI) are compositionally biased toward low complexity.

It localises to the cytoplasm. This is an uncharacterized protein from Schizosaccharomyces pombe (strain 972 / ATCC 24843) (Fission yeast).